An 840-amino-acid chain; its full sequence is E3 ubiquitin-protein ligase SH3RF1 (840 aa).

The RING-type zinc finger occupies 12 to 53; that stretch reads CPVCLERLDASAKVLPCQHTFCKRCLLGIVGSRNELRCPECR. Residues 105–129 are disordered; it reads VTCSPKDGPSSQGGPQPRAQAWSPP. SH3 domains are found at residues 134 to 193 and 196 to 259; these read PQLP…IIKP and QPPP…FNSA. 6 disordered regions span residues 267–324, 394–442, 516–545, 578–633, 652–723, and 744–773; these read DQPP…RHSM, TLNP…PRPS, GPASRGGVLANPPSTGGPAQKPPGNGVAGG, QARS…AASG, AASL…LGAE, and MAPGPQRRASSLDSAPVAPPPRQPCSSLGP. The span at 273 to 282 shows a compositional bias: low complexity; it reads GVAAGEGALA. Residues 283 to 292 are compositionally biased toward polar residues; that stretch reads TTPSSTTTKQ. Residues 292-362 form an interaction with RAC1 region; sequence QPDGKKNTKK…APSQVHISTT (71 aa). Ser-304 carries the phosphoserine modification. Composition is skewed to low complexity over residues 307 to 320 and 405 to 424; these read SLSMASKASQAAQQ and QAATPTGTAVAAAAGMGPRP. The segment at 434–537 is interaction with AKT2; it reads HPRPQPRPSV…PSTGGPAQKP (104 aa). Residues 439–500 enclose the SH3 3 domain; sequence PRPSVYVAIY…PGNYVAPVTR (62 aa). The segment covering 616-625 has biased composition (pro residues); that stretch reads SPQPPAPLGP. A compositionally biased stretch (basic and acidic residues) spans 681-692; the sequence is RPDKDGKKEKKG. Ser-709 is modified (phosphoserine). The region spanning 781-840 is the SH3 4 domain; the sequence is AVCERHRVVVSYPPQSEAELELKEGDIVFVHKKREDGWFKGTLQRNGKTGLFPGSFVENI.

Belongs to the SH3RF family. As to quaternary structure, interacts with RAC1; in a GTP-dependent manner. Interacts with MAP3K10/MLK2 and MAP3K11/MLK3. Interacts with MAPK8IP; this interaction leads to the PJAC complex (POSH-JIP or SH3RF1/MAPK8IP apoptotic complex) with a 1:1 ratio. Interacts with SIAH1. Interacts with HERP1. Probably part of a signaling complex that may contain SH3RF1, MAPK8IP, DLK1, MAP2K4/MKK4, MAP2K7/MKK7, MAPK8/JNK1, MAPK9/JNK2, AKT1 and AKT2. Found in a complex with RAC2, MAP3K7/TAK1, MAP2K7/MKK7, MAPK8IP1/JIP1, MAPK8/JNK1 and MAPK9/JNK2. Found in a complex with RAC1, MAP3K11/MLK3, MAP2K7/MKK7, MAPK8IP1/JIP1 and MAPK8/JNK1. Interacts with SH3RF2. Phosphorylated at Ser-304 by AKT1 and AKT2. When phosphorylated, it has reduced ability to bind Rac. In terms of processing, autoubiquitinated. Ubiquitinated by SH3RF2, leading to proteasome-mediated degradation.

The protein localises to the cytoplasm. It localises to the perinuclear region. The protein resides in the cell projection. It is found in the lamellipodium. Its subcellular location is the golgi apparatus. The protein localises to the trans-Golgi network. The enzyme catalyses S-ubiquitinyl-[E2 ubiquitin-conjugating enzyme]-L-cysteine + [acceptor protein]-L-lysine = [E2 ubiquitin-conjugating enzyme]-L-cysteine + N(6)-ubiquitinyl-[acceptor protein]-L-lysine.. It participates in protein modification; protein ubiquitination. In terms of biological role, has E3 ubiquitin-protein ligase activity. In the absence of an external substrate, it can catalyze self-ubiquitination. Stimulates ubiquitination of potassium channel KCNJ1, enhancing it's dynamin-dependent and clathrin-independent endocytosis. Acts as a scaffold protein that coordinates with MAPK8IP1/JIP1 in organizing different components of the JNK pathway, including RAC1 or RAC2, MAP3K11/MLK3 or MAP3K7/TAK1, MAP2K7/MKK7, MAPK8/JNK1 and/or MAPK9/JNK2 into a functional multiprotein complex to ensure the effective activation of the JNK signaling pathway. Regulates the differentiation of CD4(+) and CD8(+) T-cells and promotes T-helper 1 (Th1) cell differentiation. Regulates the activation of MAPK8/JNK1 and MAPK9/JNK2 in CD4(+) T-cells and the activation of MAPK8/JNK1 in CD8(+) T-cells. Plays a crucial role in the migration of neocortical neurons in the developing brain. Controls proper cortical neuronal migration and the formation of proximal cytoplasmic dilation in the leading process (PCDLP) in migratory neocortical neurons by regulating the proper localization of activated RAC1 and F-actin assembly. In Bos taurus (Bovine), this protein is E3 ubiquitin-protein ligase SH3RF1 (SH3RF1).